The primary structure comprises 312 residues: Very-long-chain 3-oxoacyl-CoA reductase (312 aa).

The helical transmembrane segment at 4–24 threads the bilayer; sequence ALPAAGFLYWVGAGTVAYLAL. 50–79 lines the NADP(+) pocket; the sequence is GEWAVVTGSTDGIGKSYAEELAKHGMKVVL. The next 2 helical transmembrane spans lie at 182-202 and 271-291; these read GAIL…LTIY and GYLI…WIYL. Serine 189 contributes to the substrate binding site. The Proton acceptor role is filled by tyrosine 202. A Di-lysine motif motif is present at residues 308–312; the sequence is KTKKN.

Belongs to the short-chain dehydrogenases/reductases (SDR) family. 17-beta-HSD 3 subfamily. As to quaternary structure, interacts with ELOVL1 and LASS2. As to expression, expressed in most tissues tested. Highly expressed in the ovary and mammary. Expressed in platelets.

It is found in the endoplasmic reticulum membrane. It carries out the reaction a very-long-chain (3R)-3-hydroxyacyl-CoA + NADP(+) = a very-long-chain 3-oxoacyl-CoA + NADPH + H(+). The catalysed reaction is 17beta-estradiol + NAD(+) = estrone + NADH + H(+). The enzyme catalyses 17beta-estradiol + NADP(+) = estrone + NADPH + H(+). It catalyses the reaction 3-oxooctadecanoyl-CoA + NADPH + H(+) = (3R)-hydroxyoctadecanoyl-CoA + NADP(+). It carries out the reaction (7Z,10Z,13Z,16Z)-3-oxodocosatetraenoyl-CoA + NADPH + H(+) = (3R)-hydroxy-(7Z,10Z,13Z,16Z)-docosatetraenoyl-CoA + NADP(+). The catalysed reaction is 3-oxo-(7Z,10Z,13Z,16Z,19Z)-docosapentaenoyl-CoA + NADPH + H(+) = (3R)-hydroxy-(7Z,10Z,13Z,16Z,19Z)-docosapentaenoyl-CoA + NADP(+). The enzyme catalyses (8Z,11Z,14Z)-3-oxoeicosatrienoyl-CoA + NADPH + H(+) = (3R)-hydroxy-(8Z,11Z,14Z)-eicosatrienoyl-CoA + NADP(+). It functions in the pathway lipid metabolism; fatty acid biosynthesis. The protein operates within steroid biosynthesis; estrogen biosynthesis. Its function is as follows. Catalyzes the second of the four reactions of the long-chain fatty acids elongation cycle. This endoplasmic reticulum-bound enzymatic process, allows the addition of two carbons to the chain of long- and very long-chain fatty acids/VLCFAs per cycle. This enzyme has a 3-ketoacyl-CoA reductase activity, reducing 3-ketoacyl-CoA to 3-hydroxyacyl-CoA, within each cycle of fatty acid elongation. Thereby, it may participate in the production of VLCFAs of different chain lengths that are involved in multiple biological processes as precursors of membrane lipids and lipid mediators. May also catalyze the transformation of estrone (E1) into estradiol (E2) and play a role in estrogen formation. The sequence is that of Very-long-chain 3-oxoacyl-CoA reductase from Homo sapiens (Human).